A 125-amino-acid polypeptide reads, in one-letter code: Small ribosomal subunit protein uS12m (125 aa).

It belongs to the universal ribosomal protein uS12 family.

It is found in the mitochondrion. Its function is as follows. Protein S12 is involved in the translation initiation step. The chain is Small ribosomal subunit protein uS12m (RPS12) from Brassica napus (Rape).